Consider the following 107-residue polypeptide: Ferredoxin Fdx8 (107 aa).

4Fe-4S ferredoxin-type domains lie at 1-31 (MAYVIAEPCVATCDTACVPVCPVDCIHGPLA) and 50-79 (LQLYIDPESCICCGACENECPVGAIFDEDE). Residues Cys-9, Cys-13, Cys-17, Cys-21, Cys-59, Cys-62, Cys-65, and Cys-69 each contribute to the [4Fe-4S] cluster site.

[4Fe-4S] cluster is required as a cofactor.

Ferredoxins are iron-sulfur proteins that transfer electrons in a wide variety of metabolic reactions. Fdx2 can receive electrons from both FdR_A and FdR_B ferredoxin reductases, with a preference for FdR_B compared with FdR_A, and transfer the electrons to the cytochrome P450 CYP260A1. The chain is Ferredoxin Fdx8 from Sorangium cellulosum (strain So ce56) (Polyangium cellulosum (strain So ce56)).